We begin with the raw amino-acid sequence, 200 residues long: Exopolysaccharide production protein PSS (200 aa).

The protein belongs to the bacterial sugar transferase family.

This Rhizobium leguminosarum bv. phaseoli protein is Exopolysaccharide production protein PSS (pss).